The following is a 333-amino-acid chain: Porphobilinogen deaminase (333 aa).

Cys255 carries the post-translational modification S-(dipyrrolylmethanemethyl)cysteine.

This sequence belongs to the HMBS family. Monomer. The cofactor is dipyrromethane.

It carries out the reaction 4 porphobilinogen + H2O = hydroxymethylbilane + 4 NH4(+). Its pathway is porphyrin-containing compound metabolism; protoporphyrin-IX biosynthesis; coproporphyrinogen-III from 5-aminolevulinate: step 2/4. In terms of biological role, tetrapolymerization of the monopyrrole PBG into the hydroxymethylbilane pre-uroporphyrinogen in several discrete steps. This chain is Porphobilinogen deaminase, found in Burkholderia vietnamiensis (strain G4 / LMG 22486) (Burkholderia cepacia (strain R1808)).